Consider the following 448-residue polypeptide: Beclin-1 (448 aa).

N-acetylmethionine is present on Met-1. Phosphoserine is present on residues Ser-14 and Ser-29. A phosphoserine; by AMPK mark is found at Ser-88, Ser-91, and Ser-94. The BH3 motif lies at Thr-106–Ser-125. The interval Leu-110 to Cys-157 is interaction with BCL2 and BCL2L1. Thr-117 is modified (phosphothreonine; by DAPK1). Residues Asp-140–Val-267 are a coiled coil. The interval Asp-243–Lys-448 is evolutionary conserved domain (ECD). Residues Lys-400 and Lys-435 each participate in a glycyl lysine isopeptide (Lys-Gly) (interchain with G-Cter in ubiquitin) cross-link. The required for membrane-association stretch occupies residues Trp-423–Lys-448.

The protein belongs to the beclin family. In terms of assembly, a homodimeric form is proposed to exist; this metastable form readily transits to ATG14- or UVRAG-containing complexes with BECN1:UVRAG being more stable than BECN1:ATG14. Component of the PI3K (PI3KC3/PI3K-III/class III phosphatidylinositol 3-kinase) complex the core of which is composed of the catalytic subunit PIK3C3, the regulatory subunit PIK3R4 and BECN1 associating with additional regulatory/auxiliary subunits to form alternative complex forms. Alternative complex forms containing a fourth regulatory subunit in a mutually exclusive manner are PI3K complex I (PI3KC3-C1) containing ATG14, and PI3K complex II (PI3KC3-C2) containing UVRAG. PI3KC3-C1 displays a V-shaped architecture with PIK3R4 serving as a bridge between PIK3C3 and the ATG14:BECN1 subcomplex. Both, PI3KC3-C1 and PI3KC3-C2, can associate with further regulatory subunits, such as RUBCN, SH3GLB1/Bif-1 and AMBRA1. PI3KC3-C1 probably associates with PIK3CB. Forms a complex with PPP2CA and AMBRA1; AMBRA1 and BECN1 components of the complex regulate MYC stability via different pathways. Component of the complex, at least composed of LRPPRC, BECN1 and BCL2; the interactions prevent BECN1 from forming an autophagy-inducing complex with PIK3C3. Interacts with AMBRA1, GOPC, GRID2. Interacts with BCL2 and BCL2L1 isoform Bcl-X(L); the interaction inhibits BECN1 function in promoting autophagy by interfering with the formation of the PI3K complex. Interacts with cytosolic HMGB1; inhibits the interaction of BECN1 and BCL2 leading to promotion of autophagy. Interacts with USP10, USP13, VMP1, DAPK1, RAB39A. Interacts with the poly-Gln domain of ATXN3; the interaction causes deubiquitination at Lys-400 and stabilizes BECN1. Interacts with SLAMF1. Interacts with TRIM5; the interaction causes activation of BECN1 by causing its dissociation from its inhibitors BCL2 and TAB2. Interacts with active ULK1 (phosphorylated on 'Ser-317') and MEFV simultaneously. Interacts with WDR81 and WDR91; negatively regulates the PI3 kinase/PI3K activity associated with endosomal membranes. Interacts with LAPTM4B; competes with EGFR for LAPTM4B binding; regulates EGFR activity. Interacts with TRIM50. Interacts with TRIM16. Interacts with ATG14; this interaction is increased in the absence of TMEM39A. Interacts with WASHC1; preventing interaction with AMBRA1 and the DCX(AMBRA1) complex and subsequent ubiquitination. Interacts with TRIM17. Interacts with BCL2L10/BCL-B (via BH1 domain). Interacts with SH3BGRL. Interacts with IRGM; enhancing BECN1-interacting partners and influencing the composition of the BECN1 complex. Interacts with ARMC3. Interacts with LRPPRC. As to quaternary structure, (Microbial infection) Interacts with African swine fever virus (ASFV) apoptosis regulator Bcl-2 homolog; this interaction allows the virus to inhibit BECN1, and thus autophagy. Phosphorylation at Thr-117 by DAPK1 reduces its interaction with BCL2 and BCL2L1 and promotes induction of autophagy. In response to autophagic stimuli, phosphorylated at serine residues by AMPK in an ATG14-dependent manner, and this phosphorylation is critical for maximally efficient autophagy. In terms of processing, polyubiquitinated by NEDD4, both with 'Lys-11'- and 'Lys-63'-linkages. 'Lys-11'-linked polyubiquitination leads to degradation and is enhanced when the stabilizing interaction partner VPS34 is depleted. Deubiquitinated by USP10 and USP13, leading to stabilize the PIK3C3/VPS34-containing complexes. Polyubiquitinated at Lys-400 with 'Lys-48'-linkages. 'Lys-48'-linked polyubiquitination of Lys-400 leads to degradation. Deubiquitinated by ATXN3, leading to stabilization. Ubiquitinated at Lys-435 via 'Lys-63'-linkage by the DCX(AMBRA1) complex, thereby increasing the association between BECN1 and PIK3C3 to promote PIK3C3 activity. 'Lys-48'-linked ubiquitination by RNF216 leads to proteasomal degradation and autophagy inhibition. Post-translationally, proteolytically processed by caspases including CASP8 and CASP3; the C-terminal fragments lack autophagy-inducing capacity and are proposed to induce apoptosis. Thus the cleavage is proposed to be an determinant to switch from autophagy to apoptosis pathways affecting cellular homeostasis including viral infections and survival of tumor cells.

The protein resides in the cytoplasm. It is found in the golgi apparatus. It localises to the trans-Golgi network membrane. The protein localises to the endosome membrane. Its subcellular location is the endoplasmic reticulum membrane. The protein resides in the mitochondrion membrane. It is found in the cytoplasmic vesicle. It localises to the autophagosome. The protein localises to the mitochondrion. Its subcellular location is the nucleus. Plays a central role in autophagy. Acts as a core subunit of the PI3K complex that mediates formation of phosphatidylinositol 3-phosphate; different complex forms are believed to play a role in multiple membrane trafficking pathways: PI3KC3-C1 is involved in initiation of autophagosomes and PI3KC3-C2 in maturation of autophagosomes and endocytosis. Involved in regulation of degradative endocytic trafficking and required for the abscission step in cytokinesis, probably in the context of PI3KC3-C2. Essential for the formation of PI3KC3-C2 but not PI3KC3-C1 PI3K complex forms. Involved in endocytosis. May play a role in antiviral host defense. In terms of biological role, beclin-1-C 35 kDa localized to mitochondria can promote apoptosis; it induces the mitochondrial translocation of BAX and the release of proapoptotic factors. In Sus scrofa (Pig), this protein is Beclin-1 (BECN1).